The primary structure comprises 351 residues: Fe(3+) ions import ATP-binding protein FbpC (351 aa).

The region spanning 7–237 (VVLKNVCKRF…PSSMFMANFM (231 aa)) is the ABC transporter domain. ATP is bound at residue 39–46 (GPSGCGKT).

It belongs to the ABC transporter superfamily. Fe(3+) ion importer (TC 3.A.1.10) family. In terms of assembly, the complex is composed of two ATP-binding proteins (FbpC), two transmembrane proteins (FbpB) and a solute-binding protein (FbpA).

Its subcellular location is the cell inner membrane. The enzyme catalyses Fe(3+)(out) + ATP + H2O = Fe(3+)(in) + ADP + phosphate + H(+). Its function is as follows. Part of the ABC transporter complex FbpABC involved in Fe(3+) ions import. Responsible for energy coupling to the transport system. The polypeptide is Fe(3+) ions import ATP-binding protein FbpC (Photobacterium profundum (strain SS9)).